A 264-amino-acid polypeptide reads, in one-letter code: Replication-associated protein A (264 aa).

The CRESS-DNA virus Rep endonuclease domain occupies 10–123 (RVYSKYLFLT…DVNTAEWGTF (114 aa)). An RCR-1 motif is present at residues 17–20 (FLTY). E51, H59, and H61 together coordinate a divalent metal cation. The short motif at 59–61 (HLH) is the RCR-2 element. Y106 functions as the For DNA cleavage activity in the catalytic mechanism. The RCR-3 motif lies at 106–109 (YITK). Position 110 (E110) interacts with a divalent metal cation. An oligomerization region spans residues 173–185 (TARHLFPDPVATY). The short motif at 194–198 (LICHE) is the LXCXE motif, interaction with host RBR1 element. Positions 237 to 264 (YSRSHRGGISPSTSAGQPEQERLPGQGL) are disordered.

Belongs to the geminiviridae Rep protein family. As to quaternary structure, homooligomer. Interacts (via LXCXE domain) with host retinoblastoma-related protein 1 (RBR1), and may thereby deregulate the host cell cycle. Part of the C- and V-complexes which are RepA-Rep-DNA complexes involved in the c-sense and v-sense transcription. The cofactor is Mg(2+). Requires Mn(2+) as cofactor.

The protein resides in the host nucleus. It is found in the host cytoplasm. In terms of biological role, implicated in enhancement of V-sense gene expression. Acts a an inhibitor of C-sense gene transcription. This is Replication-associated protein A from Wheat dwarf virus (isolate Sweden) (WDV).